A 328-amino-acid polypeptide reads, in one-letter code: 3-ketodihydrosphingosine reductase TSC10 (328 aa).

Position 16 (Leu16) interacts with NADP(+). NADPH-binding residues include Gly19, Ser21, and Gly23. The GXSXG signature appears at 19–23; that stretch reads GASQG. Leu24 serves as a coordination point for NADP(+). 3 residues coordinate NADPH: Arg44, Lys48, and Asp73. Residue Asp73 participates in NADP(+) binding. Catalysis depends on Ser161, which acts as the Proton donor. 3 residues coordinate NADP(+): Tyr175, Lys179, and Ser210. Tyr175 functions as the Proton acceptor in the catalytic mechanism. Lys179 acts as the Lowers pKa of active site Tyr in catalysis. Residues 277–297 traverse the membrane as a helical segment; sequence FFQVIVSFIFSIIAPIANYVV.

It belongs to the short-chain dehydrogenases/reductases (SDR) family.

The protein localises to the endoplasmic reticulum membrane. It carries out the reaction sphinganine + NADP(+) = 3-oxosphinganine + NADPH + H(+). It participates in lipid metabolism; sphingolipid metabolism. In terms of biological role, catalyzes the reduction of 3'-oxosphinganine (3-ketodihydrosphingosine/KDS) to sphinganine (dihydrosphingosine/DHS), the second step of de novo sphingolipid biosynthesis. The protein is 3-ketodihydrosphingosine reductase TSC10 (TSC10) of Debaryomyces hansenii (strain ATCC 36239 / CBS 767 / BCRC 21394 / JCM 1990 / NBRC 0083 / IGC 2968) (Yeast).